Consider the following 175-residue polypeptide: Macro domain-containing protein TTE0995 (175 aa).

In terms of domain architecture, Macro spans 1 to 174 (MKEKIKLIKG…VYSKAYEELD (174 aa)).

This sequence belongs to the MacroD-type family.

This chain is Macro domain-containing protein TTE0995, found in Caldanaerobacter subterraneus subsp. tengcongensis (strain DSM 15242 / JCM 11007 / NBRC 100824 / MB4) (Thermoanaerobacter tengcongensis).